The following is a 434-amino-acid chain: D-amino acid dehydrogenase (434 aa).

3 to 17 provides a ligand contact to FAD; it reads VLVLGSGVIGTTSAW.

It belongs to the DadA oxidoreductase family. FAD serves as cofactor.

It catalyses the reaction a D-alpha-amino acid + A + H2O = a 2-oxocarboxylate + AH2 + NH4(+). Its pathway is amino-acid degradation; D-alanine degradation; NH(3) and pyruvate from D-alanine: step 1/1. Oxidative deamination of D-amino acids. This chain is D-amino acid dehydrogenase, found in Stenotrophomonas maltophilia (strain R551-3).